We begin with the raw amino-acid sequence, 147 residues long: Deoxyuridine 5'-triphosphate nucleotidohydrolase (147 aa).

Residues 67–69 (RSG), N80, and 84–86 (TID) contribute to the substrate site.

Belongs to the dUTPase family. It depends on Mg(2+) as a cofactor.

The catalysed reaction is dUTP + H2O = dUMP + diphosphate + H(+). It functions in the pathway pyrimidine metabolism; dUMP biosynthesis; dUMP from dCTP (dUTP route): step 2/2. This enzyme is involved in nucleotide metabolism: it produces dUMP, the immediate precursor of thymidine nucleotides and it decreases the intracellular concentration of dUTP so that uracil cannot be incorporated into DNA. This chain is Deoxyuridine 5'-triphosphate nucleotidohydrolase, found in Anaplasma marginale (strain St. Maries).